We begin with the raw amino-acid sequence, 377 residues long: Homoserine O-acetyltransferase (377 aa).

One can recognise an AB hydrolase-1 domain in the interval 47–355 (NAILICHALT…DYGHDAFLLE (309 aa)). The Nucleophile role is filled by Ser-153. Arg-222 is a binding site for substrate. Active-site residues include Asp-316 and His-349. Asp-350 is a binding site for substrate.

This sequence belongs to the AB hydrolase superfamily. MetX family. As to quaternary structure, homodimer.

The protein localises to the cytoplasm. It catalyses the reaction L-homoserine + acetyl-CoA = O-acetyl-L-homoserine + CoA. It functions in the pathway amino-acid biosynthesis; L-methionine biosynthesis via de novo pathway; O-acetyl-L-homoserine from L-homoserine: step 1/1. Its function is as follows. Transfers an acetyl group from acetyl-CoA to L-homoserine, forming acetyl-L-homoserine. The chain is Homoserine O-acetyltransferase from Deferribacter desulfuricans (strain DSM 14783 / JCM 11476 / NBRC 101012 / SSM1).